A 152-amino-acid chain; its full sequence is Phospholipase A2 GL16-1 (152 aa).

A signal peptide spans 1–21 (MNPAHLLVLLAVCVSLLGAST). A propeptide spanning residues 22 to 27 (IPPLPL) is cleaved from the precursor. 7 disulfides stabilise this stretch: C38–C104, C54–C151, C56–C72, C71–C132, C78–C125, C88–C118, and C111–C123. Y55, G57, and G59 together coordinate Ca(2+). The active site involves H75. A Ca(2+)-binding site is contributed by D76. D126 is an active-site residue.

It belongs to the phospholipase A2 family. Group I subfamily. Ca(2+) serves as cofactor.

The protein resides in the secreted. It carries out the reaction a 1,2-diacyl-sn-glycero-3-phosphocholine + H2O = a 1-acyl-sn-glycero-3-phosphocholine + a fatty acid + H(+). PA2 catalyzes the calcium-dependent hydrolysis of the 2-acyl groups in 3-sn-phosphoglycerides. In Laticauda semifasciata (Black-banded sea krait), this protein is Phospholipase A2 GL16-1.